Reading from the N-terminus, the 331-residue chain is Ketol-acid reductoisomerase (NADP(+)) (331 aa).

In terms of domain architecture, KARI N-terminal Rossmann spans 2–182 (ARMYYDEDGN…GGTRAGILET (181 aa)). Residues 25 to 28 (YGSQ), Ser-51, Ser-53, and 83 to 86 (DEVQ) contribute to the NADP(+) site. The active site involves His-108. Gly-134 lines the NADP(+) pocket. Residues 183 to 328 (SFREETETDL…KDLRAMFSWL (146 aa)) form the KARI C-terminal knotted domain. The Mg(2+) site is built by Asp-191, Glu-195, Glu-227, and Glu-231. Ser-252 contacts substrate.

The protein belongs to the ketol-acid reductoisomerase family. Mg(2+) serves as cofactor.

The enzyme catalyses (2R)-2,3-dihydroxy-3-methylbutanoate + NADP(+) = (2S)-2-acetolactate + NADPH + H(+). It catalyses the reaction (2R,3R)-2,3-dihydroxy-3-methylpentanoate + NADP(+) = (S)-2-ethyl-2-hydroxy-3-oxobutanoate + NADPH + H(+). The protein operates within amino-acid biosynthesis; L-isoleucine biosynthesis; L-isoleucine from 2-oxobutanoate: step 2/4. Its pathway is amino-acid biosynthesis; L-valine biosynthesis; L-valine from pyruvate: step 2/4. In terms of biological role, involved in the biosynthesis of branched-chain amino acids (BCAA). Catalyzes an alkyl-migration followed by a ketol-acid reduction of (S)-2-acetolactate (S2AL) to yield (R)-2,3-dihydroxy-isovalerate. In the isomerase reaction, S2AL is rearranged via a Mg-dependent methyl migration to produce 3-hydroxy-3-methyl-2-ketobutyrate (HMKB). In the reductase reaction, this 2-ketoacid undergoes a metal-dependent reduction by NADPH to yield (R)-2,3-dihydroxy-isovalerate. This is Ketol-acid reductoisomerase (NADP(+)) from Gloeothece citriformis (strain PCC 7424) (Cyanothece sp. (strain PCC 7424)).